A 160-amino-acid chain; its full sequence is Deoxyuridine 5'-triphosphate nucleotidohydrolase (160 aa).

Substrate is bound by residues 79-81, N92, 96-98, and K106; these read RSG and TVD.

This sequence belongs to the dUTPase family. Mg(2+) serves as cofactor.

The catalysed reaction is dUTP + H2O = dUMP + diphosphate + H(+). It participates in pyrimidine metabolism; dUMP biosynthesis; dUMP from dCTP (dUTP route): step 2/2. In terms of biological role, this enzyme is involved in nucleotide metabolism: it produces dUMP, the immediate precursor of thymidine nucleotides and it decreases the intracellular concentration of dUTP so that uracil cannot be incorporated into DNA. This is Deoxyuridine 5'-triphosphate nucleotidohydrolase from Rhizobium meliloti (strain 1021) (Ensifer meliloti).